The chain runs to 166 residues: Large ribosomal subunit protein uL10 (166 aa).

The protein belongs to the universal ribosomal protein uL10 family. Part of the ribosomal stalk of the 50S ribosomal subunit. The N-terminus interacts with L11 and the large rRNA to form the base of the stalk. The C-terminus forms an elongated spine to which L12 dimers bind in a sequential fashion forming a multimeric L10(L12)X complex.

In terms of biological role, forms part of the ribosomal stalk, playing a central role in the interaction of the ribosome with GTP-bound translation factors. This Lactobacillus johnsonii (strain CNCM I-12250 / La1 / NCC 533) protein is Large ribosomal subunit protein uL10.